A 269-amino-acid chain; its full sequence is Thymidylate synthase (269 aa).

Residues Arg21 and 125 to 126 contribute to the dUMP site; that span reads RR. Catalysis depends on Cys145, which acts as the Nucleophile. DUMP is bound by residues 171 to 174, Asn182, and 212 to 214; these read RSGD and HVY. Asp174 is a binding site for (6R)-5,10-methylene-5,6,7,8-tetrahydrofolate. Ala268 contacts (6R)-5,10-methylene-5,6,7,8-tetrahydrofolate.

It belongs to the thymidylate synthase family. Bacterial-type ThyA subfamily. In terms of assembly, homodimer.

Its subcellular location is the cytoplasm. The catalysed reaction is dUMP + (6R)-5,10-methylene-5,6,7,8-tetrahydrofolate = 7,8-dihydrofolate + dTMP. The protein operates within pyrimidine metabolism; dTTP biosynthesis. In terms of biological role, catalyzes the reductive methylation of 2'-deoxyuridine-5'-monophosphate (dUMP) to 2'-deoxythymidine-5'-monophosphate (dTMP) while utilizing 5,10-methylenetetrahydrofolate (mTHF) as the methyl donor and reductant in the reaction, yielding dihydrofolate (DHF) as a by-product. This enzymatic reaction provides an intracellular de novo source of dTMP, an essential precursor for DNA biosynthesis. In Cutibacterium acnes (strain DSM 16379 / KPA171202) (Propionibacterium acnes), this protein is Thymidylate synthase.